Here is a 263-residue protein sequence, read N- to C-terminus: uncharacterized protein (263 aa).

Position 31-38 (31-38) interacts with ATP; it reads GPTGSGKT.

Belongs to the CbbQ/NirQ/NorQ/GpvN family.

This is an uncharacterized protein from Staphylococcus epidermidis (strain ATCC 12228 / FDA PCI 1200).